The chain runs to 292 residues: 4-hydroxy-tetrahydrodipicolinate synthase (292 aa).

Pyruvate is bound at residue Thr45. Residue Tyr133 is the Proton donor/acceptor of the active site. Lys161 acts as the Schiff-base intermediate with substrate in catalysis. Ile203 serves as a coordination point for pyruvate.

It belongs to the DapA family. Homotetramer; dimer of dimers.

The protein resides in the cytoplasm. It catalyses the reaction L-aspartate 4-semialdehyde + pyruvate = (2S,4S)-4-hydroxy-2,3,4,5-tetrahydrodipicolinate + H2O + H(+). It participates in amino-acid biosynthesis; L-lysine biosynthesis via DAP pathway; (S)-tetrahydrodipicolinate from L-aspartate: step 3/4. In terms of biological role, catalyzes the condensation of (S)-aspartate-beta-semialdehyde [(S)-ASA] and pyruvate to 4-hydroxy-tetrahydrodipicolinate (HTPA). This Herminiimonas arsenicoxydans protein is 4-hydroxy-tetrahydrodipicolinate synthase.